Consider the following 1055-residue polypeptide: Ephrin type-B receptor 2 (1055 aa).

An N-terminal signal peptide occupies residues Met1–Ala18. The Extracellular segment spans residues Val19–Leu543. An Eph LBD domain is found at Glu20–Gln202. 2 disulfides stabilise this stretch: Cys62/Cys184 and Cys97/Cys107. N-linked (GlcNAc...) asparagine glycans are attached at residues Asn265, Asn336, Asn428, and Asn482. 2 consecutive Fibronectin type-III domains span residues Ile324 to Ala434 and Ala435 to Glu530. The chain crosses the membrane as a helical span at residues Ile544–Val564. Over Cys565 to Gly1055 the chain is Cytoplasmic. One can recognise a Protein kinase domain in the interval Val621 to Ile884. ATP-binding positions include Ile627–Val635 and Lys653. Catalysis depends on Asp746, which acts as the Proton acceptor. A Glycyl lysine isopeptide (Lys-Gly) (interchain with G-Cter in ubiquitin) cross-link involves residue Lys891. The region spanning Thr913–Gln977 is the SAM domain. 2 positions are modified to phosphoserine: Ser983 and Val984. The short motif at Val984–Gly986 is the PDZ-binding (in isoform 2) element. The tract at residues Ala990–Gly1055 is disordered. A compositionally biased stretch (basic residues) spans Arg991–Cys1002. Residues Lys1025 to Asn1049 show a composition bias toward basic and acidic residues.

It belongs to the protein kinase superfamily. Tyr protein kinase family. Ephrin receptor subfamily. As to quaternary structure, heterotetramer upon binding of the ligand. The heterotetramer is composed of an ephrin dimer and a receptor dimer. Interacts (via PDZ-binding motif) with GRIP1 and PICK1 (via PDZ domain). Interacts with ARHGEF15; mediates ARHGEF15 phosphorylation, ubiquitination and degradation by the proteasome. Interacts with AQP1; involved in endolymph production in the inner ear. Interacts with SPSB1 and SPSB4. The phosphorylated form interacts with RASA1 (via SH2 domain 1). Interacts with EFNA5. Interacts with SH2D3C. In terms of processing, autophosphorylated; ligand binding stimulates autophosphorylation on tyrosine residues. Polyubiquitinated; ligand binding stimulates ubiquitination. Ubiquitinated by RNF186 at Lys-891, mainly through 'Lys-27'-linked polyubiquitin chains. Ubiquitinated by CRL2(KLHDC2) E3 ligase complex. Post-translationally, ligand binding induces cleavage by matrix metalloproteinases (MMPs) such as MMP7/MMP9, producing an EphB2/N-terminal fragment (NTF) and a C-terminal long fragment (EphB2-LF). EphB2-LF is further cleaved by MMPs, producing EphB2/CTF1 which is further cleaved by the PS1/gamma-secretase producing EphB2/CTF2. Brain, heart, lung, kidney, placenta, pancreas, liver and skeletal muscle. Preferentially expressed in fetal brain.

It is found in the cell membrane. It localises to the cell projection. Its subcellular location is the axon. The protein resides in the dendrite. The catalysed reaction is L-tyrosyl-[protein] + ATP = O-phospho-L-tyrosyl-[protein] + ADP + H(+). Functionally, receptor tyrosine kinase which binds promiscuously transmembrane ephrin-B family ligands residing on adjacent cells, leading to contact-dependent bidirectional signaling into neighboring cells. The signaling pathway downstream of the receptor is referred to as forward signaling while the signaling pathway downstream of the ephrin ligand is referred to as reverse signaling. Functions in axon guidance during development. Involved in the guidance of commissural axons, that form a major interhemispheric connection between the 2 temporal lobes of the cerebral cortex. Also involved in guidance of contralateral inner ear efferent growth cones at the midline and of retinal ganglion cell axons to the optic disk. In addition to axon guidance, also regulates dendritic spines development and maturation and stimulates the formation of excitatory synapses. Upon activation by EFNB1, abolishes the ARHGEF15-mediated negative regulation on excitatory synapse formation. Controls other aspects of development including angiogenesis, palate development and in inner ear development through regulation of endolymph production. Forward and reverse signaling through the EFNB2/EPHB2 complex regulate movement and adhesion of cells that tubularize the urethra and septate the cloaca. May function as a tumor suppressor. May be involved in the regulation of platelet activation and blood coagulation. This is Ephrin type-B receptor 2 (EPHB2) from Homo sapiens (Human).